The sequence spans 801 residues: Xaa-Pro dipeptidyl-peptidase (801 aa).

Active-site charge relay system residues include Ser371, Asp491, and His522.

Belongs to the peptidase S15 family. As to quaternary structure, homodimer.

It is found in the cytoplasm. The enzyme catalyses Hydrolyzes Xaa-Pro-|- bonds to release unblocked, N-terminal dipeptides from substrates including Ala-Pro-|-p-nitroanilide and (sequentially) Tyr-Pro-|-Phe-Pro-|-Gly-Pro-|-Ile.. Its function is as follows. Removes N-terminal dipeptides sequentially from polypeptides having unsubstituted N-termini provided that the penultimate residue is proline. This chain is Xaa-Pro dipeptidyl-peptidase, found in Ligilactobacillus salivarius (strain UCC118) (Lactobacillus salivarius).